The primary structure comprises 251 residues: Hydroxyacylglutathione hydrolase (251 aa).

Residues His53, His55, Asp57, His58, His110, Asp127, and His165 each coordinate Zn(2+).

Belongs to the metallo-beta-lactamase superfamily. Glyoxalase II family. Monomer. Zn(2+) is required as a cofactor.

The enzyme catalyses an S-(2-hydroxyacyl)glutathione + H2O = a 2-hydroxy carboxylate + glutathione + H(+). It functions in the pathway secondary metabolite metabolism; methylglyoxal degradation; (R)-lactate from methylglyoxal: step 2/2. Thiolesterase that catalyzes the hydrolysis of S-D-lactoyl-glutathione to form glutathione and D-lactic acid. The sequence is that of Hydroxyacylglutathione hydrolase from Escherichia coli (strain SMS-3-5 / SECEC).